The following is a 47-amino-acid chain: PhoP/PhoQ regulator MgrB (47 aa).

A helical transmembrane segment spans residues 6 to 26 (WVVLVVVVLACLLLWAQVFNM).

It belongs to the MgrB family. May form homooligomers. Probably interacts with the periplasmic domain of PhoQ.

The protein localises to the cell inner membrane. In terms of biological role, phoP-regulated transcription is redox-sensitive, being activated when the periplasm becomes more reducing. MgrB acts between DsbA/DsbB and PhoP/PhoQ in this pathway. Represses PhoP/PhoQ signaling, possibly by binding to the periplasmic domain of PhoQ, altering its activity and that of downstream effector PhoP. This chain is PhoP/PhoQ regulator MgrB, found in Escherichia coli O157:H7.